The sequence spans 233 residues: 5'-methylthioadenosine/S-adenosylhomocysteine nucleosidase (233 aa).

Catalysis depends on Glu12, which acts as the Proton acceptor. Residues Gly78, Ile152, and 173 to 174 (ME) each bind substrate. Asp197 (proton donor) is an active-site residue.

The protein belongs to the PNP/UDP phosphorylase family. MtnN subfamily. In terms of assembly, homodimer.

It carries out the reaction S-adenosyl-L-homocysteine + H2O = S-(5-deoxy-D-ribos-5-yl)-L-homocysteine + adenine. The catalysed reaction is S-methyl-5'-thioadenosine + H2O = 5-(methylsulfanyl)-D-ribose + adenine. The enzyme catalyses 5'-deoxyadenosine + H2O = 5-deoxy-D-ribose + adenine. Its pathway is amino-acid biosynthesis; L-methionine biosynthesis via salvage pathway; S-methyl-5-thio-alpha-D-ribose 1-phosphate from S-methyl-5'-thioadenosine (hydrolase route): step 1/2. Catalyzes the irreversible cleavage of the glycosidic bond in both 5'-methylthioadenosine (MTA) and S-adenosylhomocysteine (SAH/AdoHcy) to adenine and the corresponding thioribose, 5'-methylthioribose and S-ribosylhomocysteine, respectively. Also cleaves 5'-deoxyadenosine, a toxic by-product of radical S-adenosylmethionine (SAM) enzymes, into 5-deoxyribose and adenine. Thus, is required for in vivo function of the radical SAM enzymes biotin synthase and lipoic acid synthase, that are inhibited by 5'-deoxyadenosine accumulation. This Yersinia pestis bv. Antiqua (strain Antiqua) protein is 5'-methylthioadenosine/S-adenosylhomocysteine nucleosidase.